Consider the following 409-residue polypeptide: Elongation factor Tu (409 aa).

A tr-type G domain is found at 10–214 (KPHVNVGTIG…AVDNYIPTPE (205 aa)). The G1 stretch occupies residues 19-26 (GHVDHGKT). GTP is bound at residue 19–26 (GHVDHGKT). T26 serves as a coordination point for Mg(2+). Residues 60-64 (GITIN) form a G2 region. A G3 region spans residues 81–84 (DCPG). Residues 81–85 (DCPGH) and 136–139 (NKVD) each bind GTP. The tract at residues 136-139 (NKVD) is G4. The G5 stretch occupies residues 174 to 176 (SGL).

The protein belongs to the TRAFAC class translation factor GTPase superfamily. Classic translation factor GTPase family. EF-Tu/EF-1A subfamily. Monomer.

The protein resides in the cytoplasm. It catalyses the reaction GTP + H2O = GDP + phosphate + H(+). Functionally, GTP hydrolase that promotes the GTP-dependent binding of aminoacyl-tRNA to the A-site of ribosomes during protein biosynthesis. This Thermosynechococcus vestitus (strain NIES-2133 / IAM M-273 / BP-1) protein is Elongation factor Tu.